The primary structure comprises 741 residues: Lamin-B receptor (741 aa).

The segment at 29–126 (RLRRPRRTED…TGSGSGSSLP (98 aa)) is disordered. Low complexity-rich tracts occupy residues 57 to 84 (TRRTGSVTAAGATATATATAGPATRTRA) and 109 to 126 (PRSSVGPLTGSGSGSSLP). Position 111 is a phosphoserine (S111). Residue T135 is modified to Phosphothreonine. S144 carries the phosphoserine modification. Over residues 160–184 (TNTSSGAPNKAFNTSSVNSGNSFSR) the composition is skewed to polar residues. Positions 160–194 (TNTSSGAPNKAFNTSSVNSGNSFSRTTTSSTTTTT) are disordered. Residues 185 to 194 (TTTSSTTTTT) show a composition bias toward low complexity. A phosphoserine mark is found at S223 and S225. The span at 231 to 240 (LAGTPVTNTE) shows a compositional bias: polar residues. The tract at residues 231–277 (LAGTPVTNTEEGSRYSRSVSRSVYDDEKSSKRSYSTGEEDIDEEDEL) is disordered. Phosphothreonine is present on residues T234 and T237. Phosphoserine occurs at positions 243, 246, 248, 250, and 263. T266 carries the phosphothreonine modification. A compositionally biased stretch (acidic residues) spans 267 to 277 (GEEDIDEEDEL). S284 is subject to Phosphoserine. T288 is modified (phosphothreonine). S291 is subject to Phosphoserine. Residue T293 is modified to Phosphothreonine. Phosphoserine is present on S298. The next 8 membrane-spanning stretches (helical) occupy residues 308-328 (FGGWLGAFLFLLLLPTAVYYL), 363-383 (VVGAFAAYQVVVFLLVALLPG), 402-422 (LTLLIASGVAEYLKYPVVTFV), 429-449 (FCIFGLVGAFVAAAWSYWLVD), 497-517 (LSLVTTLIYATCYIYQTLVWP), 543-563 (PATLFSASCLLFYVLDAIIFE), 577-599 (YGCLLLLRYAATPYLLTAVTKYF), and 604-624 (VPISCWYAPLAVAALLSLGLL). Residues S640 and S642 each carry the phosphoserine modification. A helical membrane pass occupies residues 687-707 (MALRPAWPPVLGLSLIILLLL).

The protein belongs to the ERG4/ERG24 family. As to quaternary structure, interacts directly with LAM.

The protein localises to the nucleus inner membrane. Anchors the lamina and the heterochromatin to the inner nuclear membrane. The protein is Lamin-B receptor of Drosophila melanogaster (Fruit fly).